The sequence spans 274 residues: Deoxyribonuclease TATDN3 (274 aa).

Zn(2+) contacts are provided by H12, H14, E107, H147, H170, and D218.

The protein belongs to the metallo-dependent hydrolases superfamily. TatD-type hydrolase family. It depends on Mn(2+) as a cofactor. The cofactor is Ca(2+). Requires Mg(2+) as cofactor. Zn(2+) is required as a cofactor.

It localises to the nucleus. Its activity is regulated as follows. The 3'-exonuclease activity is sensitive to the metal ion present in the active site, whereas the AP endodeoxyribonuclease activity is observed in a variety of divalent metal cofactors. 3'-exoxonuclease activity is suppressed in the presence of Ca(2+), Zn(2+) and Ni(2+). In terms of biological role, exhibits 3'-exonuclease activities and apurinic/apyrimidinic (AP) endonuclease (in vitro). Show preferential AP endonuclease activity on double-stranded DNA substrates and 3'- exonuclease activity on single-stranded DNA. The sequence is that of Deoxyribonuclease TATDN3 (TATDN3) from Homo sapiens (Human).